The chain runs to 502 residues: Sodium/proline symporter (502 aa).

Over 1–5 the chain is Periplasmic; sequence MAIST. Residues 6–26 form a helical membrane-spanning segment; it reads PMLVTFCVYIFGMILIGFIAW. Residues 27–41 are Cytoplasmic-facing; sequence RSTKNFDDYILGGRS. Hydrophilic stretches follow at residues 27-66 and 88-124; these read RSTKNFDDYILGGRSLGPFVTALSAGASDMSGWLLMGLPG and INWKLVAGRLRVHTEYNNNALTLPDYFTGRFEDKSRI. A helical transmembrane segment spans residues 42-62; sequence LGPFVTALSAGASDMSGWLLM. Residues 63 to 67 are Periplasmic-facing; the sequence is GLPGA. A helical transmembrane segment spans residues 68–88; that stretch reads VFLSGISESWIAIGLTLGAWI. Residues 89–126 are Cytoplasmic-facing; it reads NWKLVAGRLRVHTEYNNNALTLPDYFTGRFEDKSRILR. Residues 127 to 147 form a helical membrane-spanning segment; the sequence is IISALVILLFFTIYCASGIVA. Over 148-162 the chain is Periplasmic; sequence GARLFESTFGMSYET. A hydrophilic region spans residues 151–162; sequence LFESTFGMSYET. A helical transmembrane segment spans residues 163–183; it reads ALWAGAAATILYTFIGGFLAV. Topologically, residues 184–192 are cytoplasmic; sequence SWTDTVQAS. Positions 185–189 are hydrophilic; it reads WTDTV. A helical transmembrane segment spans residues 193-213; it reads LMIFALILTPVIVIISVGGFG. 3 hydrophilic regions span residues 214-231, 249-274, and 296-319; these read DSLEVIKQKSIENVDMLK, FGQPHILARFMAADSHHSIVHARRIS, and FNDHPALAGAVNQNAERVFIELAQ. Residues 214 to 234 lie on the Periplasmic side of the membrane; that stretch reads DSLEVIKQKSIENVDMLKGLN. Residues 235-255 traverse the membrane as a helical segment; sequence FVAIISLMGWGLGYFGQPHIL. The Cytoplasmic segment spans residues 256–275; that stretch reads ARFMAADSHHSIVHARRISM. The helical transmembrane segment at 276–296 threads the bilayer; sequence TWMILCLAGAVAVGFFGIAYF. Over 297 to 319 the chain is Periplasmic; it reads NDHPALAGAVNQNAERVFIELAQ. The helical transmembrane segment at 320–340 threads the bilayer; the sequence is ILFNPWIAGILLSAILAAVMS. Topologically, residues 341 to 370 are cytoplasmic; that stretch reads TLSCQLLVCSSAITEDLYKAFLRKHASQKE. The hydrophilic stretch occupies residues 341–370; that stretch reads TLSCQLLVCSSAITEDLYKAFLRKHASQKE. The chain crosses the membrane as a helical span at residues 371–391; the sequence is LVWVGRVMVLVVALVAIALAA. Residues 392–397 lie on the Periplasmic side of the membrane; the sequence is NPENRV. Positions 392 to 397 are hydrophilic; sequence NPENRV. The helical transmembrane segment at 398–418 threads the bilayer; sequence LGLVSYAWAGFGAAFGPVVLF. The Cytoplasmic portion of the chain corresponds to 419-427; the sequence is SVMWSRMTR. 2 hydrophilic regions span residues 424–430 and 446–448; these read RMTRNGA and QFG. A run of 2 helical transmembrane segments spans residues 428–448 and 449–469; these read NGALAGMIIGALTVIVWKQFG and WLGLYEIIPGFIFGSIGIVVF. The Cytoplasmic portion of the chain corresponds to 470–502; it reads SLLGKAPSAAMQKRFAEADAHYHSAPPSRLQES. Residues 476 to 502 form a hydrophilic region; sequence PSAAMQKRFAEADAHYHSAPPSRLQES.

This sequence belongs to the sodium:solute symporter (SSF) (TC 2.A.21) family. As to quaternary structure, has been isolated from inner membrane preparations as a homodimer.

Its subcellular location is the cell inner membrane. It catalyses the reaction L-proline(in) + Na(+)(in) = L-proline(out) + Na(+)(out). Its activity is regulated as follows. Activity is stimulated by phosphatidylethanolamine and phosphatidylglycerol, but not by phosphatidylcholine and cardiolipin. Proline uptake is inhibited by the sulfhydryl reagent N-ethylmaleimide (NEM). Proline, in the presence of Na(+) or Li(+), protects the carrier functions from NEM-inactivation. Catalyzes the sodium-dependent uptake of extracellular L-proline. This protein is also capable of using lithium as the transport cation. Also catalyzes the uptake of propionate. The chain is Sodium/proline symporter (putP) from Escherichia coli (strain K12).